The primary structure comprises 1576 residues: eIF-2-alpha kinase GCN2 (1576 aa).

The region spanning 16-127 is the RWD domain; sequence NEIEALKAIF…SIVQDYLNDW (112 aa). Residues 180-204 form a disordered region; the sequence is QDELQRRSYETPQSSSKKKTNSKET. Protein kinase domains lie at 235–511 and 556–928; these read VLPL…HVIR and FEEL…EEFI. ATP is bound by residues 562–570 and Lys-585; that span reads LGRGGFGEV. The segment at 673–714 is disordered; that stretch reads YNSSADEEDPEASDISFQYSNTSDKEGSSDKDSSIEEASSVK. The segment covering 695–706 has biased composition (basic and acidic residues); that stretch reads SDKEGSSDKDSS. The Proton acceptor role is filled by Asp-772.

The protein belongs to the protein kinase superfamily. Ser/Thr protein kinase family. GCN2 subfamily. Homodimer; homodimerization is important for kinase activation by uncharged tRNAs. Interacts (via N-terminal RWD domain) with gcn1 (via N- and C-terminus); this interaction stimulates gcn2 kinase activity in a gcn20-dependent manner in response to amino acid starvation. Interacts (via N-terminus) with the gcn1-gcn20 complex on translating ribosomes in amino acid-starved cells; gcn1 may bind near the ribosomal A-site and promotes the transfer of uncharged tRNAs from the A-site to the tRNA-binding domain in gcn2 for its subsequent kinase activation, and hence allowing fil1 translational activation and derepression of amino acid biosynthetic genes. Post-translationally, autophosphorylated.

The protein localises to the cytoplasm. It carries out the reaction L-seryl-[protein] + ATP = O-phospho-L-seryl-[protein] + ADP + H(+). It catalyses the reaction L-threonyl-[protein] + ATP = O-phospho-L-threonyl-[protein] + ADP + H(+). The integrated stress response (ISR) is activated in response to conditions that promote ribosome collisions: gcn1, which acts as a ribosome collision sensor, activates gcn2. The RQC pathway and the integrated stress response (ISR) antagonize each other: hel2 prevents the activation of gcn2, while gcn2 suppresses RQC activation. Ribosome stalling-induced integrated stress response prefers ribosomes with empty A sites. The kinase activity is stimulated upon binding to uncharged tRNAs. Functionally, metabolic-stress sensing protein kinase that phosphorylates the alpha subunit of eukaryotic translation initiation factor 2 (eIF-2-alpha/SUI2) on 'Ser-52' in response to low amino acid, carbon, or purine availability. Required for adapatation to nutrient starvation by acting as a key component of the integrated stress response (ISR), by which cells alter their translational and transcriptional output in response to starvation. Converts phosphorylated eIF-2-alpha/SUI2 either to a competitive inhibitor of translation initiation factor eIF-2B, leading to a global protein synthesis repression, and thus to a reduced overall utilization of amino acids, or to a translational initiation activation of specific mRNAs, such as the transcriptional activator GCN4, and hence allowing GCN4-mediated reprogramming of transcription to alleviate nutrient depletion. Binds uncharged tRNAs. The chain is eIF-2-alpha kinase GCN2 from Schizosaccharomyces pombe (strain 972 / ATCC 24843) (Fission yeast).